Consider the following 188-residue polypeptide: Elongation factor P-like protein (188 aa).

It belongs to the elongation factor P family.

The sequence is that of Elongation factor P-like protein from Aliivibrio fischeri (strain MJ11) (Vibrio fischeri).